The following is a 320-amino-acid chain: Acetyl-coenzyme A carboxylase carboxyl transferase subunit alpha (320 aa).

A CoA carboxyltransferase C-terminal domain is found at 41 to 295 (SIEEKAAQAL…GDAIAGALND (255 aa)).

This sequence belongs to the AccA family. Acetyl-CoA carboxylase is a heterohexamer composed of biotin carboxyl carrier protein (AccB), biotin carboxylase (AccC) and two subunits each of ACCase subunit alpha (AccA) and ACCase subunit beta (AccD).

Its subcellular location is the cytoplasm. It carries out the reaction N(6)-carboxybiotinyl-L-lysyl-[protein] + acetyl-CoA = N(6)-biotinyl-L-lysyl-[protein] + malonyl-CoA. The protein operates within lipid metabolism; malonyl-CoA biosynthesis; malonyl-CoA from acetyl-CoA: step 1/1. Its function is as follows. Component of the acetyl coenzyme A carboxylase (ACC) complex. First, biotin carboxylase catalyzes the carboxylation of biotin on its carrier protein (BCCP) and then the CO(2) group is transferred by the carboxyltransferase to acetyl-CoA to form malonyl-CoA. This Nitrobacter winogradskyi (strain ATCC 25391 / DSM 10237 / CIP 104748 / NCIMB 11846 / Nb-255) protein is Acetyl-coenzyme A carboxylase carboxyl transferase subunit alpha.